We begin with the raw amino-acid sequence, 286 residues long: ATP synthase gamma chain (286 aa).

It belongs to the ATPase gamma chain family. F-type ATPases have 2 components, CF(1) - the catalytic core - and CF(0) - the membrane proton channel. CF(1) has five subunits: alpha(3), beta(3), gamma(1), delta(1), epsilon(1). CF(0) has three main subunits: a, b and c.

The protein resides in the cell inner membrane. Functionally, produces ATP from ADP in the presence of a proton gradient across the membrane. The gamma chain is believed to be important in regulating ATPase activity and the flow of protons through the CF(0) complex. The protein is ATP synthase gamma chain of Flavobacterium johnsoniae (strain ATCC 17061 / DSM 2064 / JCM 8514 / BCRC 14874 / CCUG 350202 / NBRC 14942 / NCIMB 11054 / UW101) (Cytophaga johnsonae).